Here is a 66-residue protein sequence, read N- to C-terminus: Moricin-2 (66 aa).

The signal sequence occupies residues 1–24 (MNILKLFFVFIVAMSLVSCSTAAP).

As to expression, expressed in fat body and to a lesser extent in hemocyte and Malpighian tubules.

Its subcellular location is the secreted. Functionally, has antibacterial activity against Gram-positive and Gram-negative bacteria. Probably acts by disturbing membrane functions with its amphipathic structure. In Bombyx mori (Silk moth), this protein is Moricin-2 (MOR2).